A 192-amino-acid polypeptide reads, in one-letter code: Hydrogenase expression/formation protein HupD (192 aa).

Ni(2+)-binding residues include glutamate 23, aspartate 69, and histidine 100.

The protein belongs to the peptidase A31 family.

Not known. Could be involved in the processing of hydrogenase. The sequence is that of Hydrogenase expression/formation protein HupD (hupD) from Bradyrhizobium diazoefficiens (strain JCM 10833 / BCRC 13528 / IAM 13628 / NBRC 14792 / USDA 110).